Reading from the N-terminus, the 357-residue chain is GDP-mannose transporter 2 (357 aa).

The Cytoplasmic portion of the chain corresponds to 1–43; that stretch reads MASTRNGISKDELLPTYELQSQRDVENSGSVTSFASKISNNAA. The chain crosses the membrane as a helical span at residues 44–64; sequence AAVLAYCLSSISMTLVNKYVV. Residues 65–68 are Lumenal-facing; it reads SGAS. Residues 69–89 form a helical membrane-spanning segment; that stretch reads WNLSFLYLAIQSFIGTVAIMV. Topologically, residues 90-107 are cytoplasmic; that stretch reads CKKAGLIQNLGLFDLKKA. Residues 108–128 form a helical membrane-spanning segment; it reads QTWLPISLLLVGMIYTGNKAL. Glutamine 129 is a topological domain (lumenal). Residues 130–150 form a helical membrane-spanning segment; it reads FLSVPVYTIFKNLTIIVIAYG. At 151 to 161 the chain is on the cytoplasmic side; sequence EVFMVGGSVKP. Residues 162 to 182 traverse the membrane as a helical segment; the sequence is LALLSFGLMVLSSVVAAWADI. Topologically, residues 183–196 are lumenal; sequence QIATAATAKASSDS. A helical membrane pass occupies residues 197-217; sequence AVATLSALNAGYAWMGTNVVF. The Cytoplasmic portion of the chain corresponds to 218 to 238; the sequence is SASYALGMRRVIKKTNFDNWD. A helical transmembrane segment spans residues 239–259; that stretch reads VMFYNNLLSVPILLLSSLLVE. At 260–277 the chain is on the lumenal side; that stretch reads DWSSENLQRNFPAESRQS. Residues 278-298 form a helical membrane-spanning segment; that stretch reads LVIGIFYSGVAAIFISYCTAW. At 299–306 the chain is on the cytoplasmic side; it reads CVRATSST. Residues 307–327 form a helical membrane-spanning segment; that stretch reads TYAMVGALNKLPLAVAGIVFF. The Lumenal segment spans residues 328–332; it reads AAPVT. A helical membrane pass occupies residues 333–352; the sequence is FGSVSAIVLGFISGLVYTWA. Topologically, residues 353–357 are cytoplasmic; that stretch reads KSTGA.

Belongs to the TPT transporter family. SLC35D subfamily. Homooligomer.

It is found in the golgi apparatus membrane. It localises to the cytoplasmic vesicle membrane. The protein localises to the endoplasmic reticulum membrane. Involved in the import of GDP-mannose from the cytoplasm into the Golgi lumen. This Emericella nidulans (strain FGSC A4 / ATCC 38163 / CBS 112.46 / NRRL 194 / M139) (Aspergillus nidulans) protein is GDP-mannose transporter 2 (gmt2).